Reading from the N-terminus, the 348-residue chain is Succinylglutamate desuccinylase (348 aa).

Zn(2+) is bound by residues His-67, Glu-70, and His-164. The active site involves Glu-228.

The protein belongs to the AspA/AstE family. Succinylglutamate desuccinylase subfamily. Zn(2+) serves as cofactor.

The enzyme catalyses N-succinyl-L-glutamate + H2O = L-glutamate + succinate. It functions in the pathway amino-acid degradation; L-arginine degradation via AST pathway; L-glutamate and succinate from L-arginine: step 5/5. Functionally, transforms N(2)-succinylglutamate into succinate and glutamate. This Shewanella denitrificans (strain OS217 / ATCC BAA-1090 / DSM 15013) protein is Succinylglutamate desuccinylase.